The chain runs to 239 residues: Lipoprotein-releasing system ATP-binding protein LolD (239 aa).

One can recognise an ABC transporter domain in the interval Val-10–Ala-239. Gly-46–Ser-53 provides a ligand contact to ATP.

It belongs to the ABC transporter superfamily. Lipoprotein translocase (TC 3.A.1.125) family. The complex is composed of two ATP-binding proteins (LolD) and two transmembrane proteins (LolC and LolE).

It is found in the cell inner membrane. Part of the ABC transporter complex LolCDE involved in the translocation of mature outer membrane-directed lipoproteins, from the inner membrane to the periplasmic chaperone, LolA. Responsible for the formation of the LolA-lipoprotein complex in an ATP-dependent manner. This Anaeromyxobacter dehalogenans (strain 2CP-C) protein is Lipoprotein-releasing system ATP-binding protein LolD.